A 185-amino-acid chain; its full sequence is Elongation factor P (185 aa).

This sequence belongs to the elongation factor P family.

The protein localises to the cytoplasm. The protein operates within protein biosynthesis; polypeptide chain elongation. Its function is as follows. Involved in peptide bond synthesis. Stimulates efficient translation and peptide-bond synthesis on native or reconstituted 70S ribosomes in vitro. Probably functions indirectly by altering the affinity of the ribosome for aminoacyl-tRNA, thus increasing their reactivity as acceptors for peptidyl transferase. This Burkholderia cenocepacia (strain HI2424) protein is Elongation factor P.